A 72-amino-acid polypeptide reads, in one-letter code: Inner membrane protein YmgF (72 aa).

Over 1 to 9 (MNNSNNLDY) the chain is Cytoplasmic. Residues 10 to 30 (FTLYIIFSIAFMLITLLVILI) form a helical membrane-spanning segment. Over 31 to 34 (AKPS) the chain is Periplasmic. The chain crosses the membrane as a helical span at residues 35-55 (TGLGEVLVTINLLNALVWLAI). Residues 56–72 (NLVNRLRERLVNHRDQQ) lie on the Cytoplasmic side of the membrane.

In terms of assembly, interacts with FtsL, FtsQ, FtsI, FtsN, and probably many other cell division proteins.

It localises to the cell inner membrane. Its function is as follows. Could be involved in cell division. May participate in the stabilization of the cell divisome under specific conditions. The polypeptide is Inner membrane protein YmgF (ymgF) (Escherichia coli (strain K12)).